The primary structure comprises 267 residues: Small ribosomal subunit protein uS2c (267 aa).

A disordered region spans residues 237–267; it reads KQKIKKTGVKISGNRRTSSITKKRNPASSKI. Residues 250–267 show a composition bias toward polar residues; sequence NRRTSSITKKRNPASSKI.

Belongs to the universal ribosomal protein uS2 family.

It localises to the plastid. Its subcellular location is the chloroplast. This is Small ribosomal subunit protein uS2c (rps2) from Chlorella vulgaris (Green alga).